The following is a 256-amino-acid chain: 1-(5-phosphoribosyl)-5-[(5-phosphoribosylamino)methylideneamino] imidazole-4-carboxamide isomerase (256 aa).

The active-site Proton acceptor is Asp-8. Residue Asp-130 is the Proton donor of the active site.

The protein belongs to the HisA/HisF family.

The protein localises to the cytoplasm. It catalyses the reaction 1-(5-phospho-beta-D-ribosyl)-5-[(5-phospho-beta-D-ribosylamino)methylideneamino]imidazole-4-carboxamide = 5-[(5-phospho-1-deoxy-D-ribulos-1-ylimino)methylamino]-1-(5-phospho-beta-D-ribosyl)imidazole-4-carboxamide. The protein operates within amino-acid biosynthesis; L-histidine biosynthesis; L-histidine from 5-phospho-alpha-D-ribose 1-diphosphate: step 4/9. This chain is 1-(5-phosphoribosyl)-5-[(5-phosphoribosylamino)methylideneamino] imidazole-4-carboxamide isomerase, found in Pelodictyon phaeoclathratiforme (strain DSM 5477 / BU-1).